The primary structure comprises 644 residues: 3D-(3,5/4)-trihydroxycyclohexane-1,2-dione hydrolase (644 aa).

Residue Glu-65 participates in thiamine diphosphate binding. The segment at 442 to 522 is thiamine pyrophosphate binding; the sequence is SLPGDLQRMW…INVLLFDNSG (81 aa). Mg(2+) is bound by residues Asp-493 and Asn-520.

The protein belongs to the TPP enzyme family. Mg(2+) is required as a cofactor. The cofactor is thiamine diphosphate.

The catalysed reaction is 3D-3,5/4-trihydroxycyclohexane-1,2-dione + H2O = 5-deoxy-D-glucuronate + H(+). The protein operates within polyol metabolism; myo-inositol degradation into acetyl-CoA; acetyl-CoA from myo-inositol: step 3/7. In terms of biological role, involved in the cleavage of the C1-C2 bond of 3D-(3,5/4)-trihydroxycyclohexane-1,2-dione (THcHDO) to yield 5-deoxy-glucuronate (5DG). In Bacillus thuringiensis (strain Al Hakam), this protein is 3D-(3,5/4)-trihydroxycyclohexane-1,2-dione hydrolase.